A 544-amino-acid chain; its full sequence is Cytochrome P450 monooxygenase cle2 (544 aa).

A helical membrane pass occupies residues 19-39 (LGLLIGLSLILSITWTAYTIL). A disordered region spans residues 273-305 (RTQQVEQSIEKNTKNEKKEDEDEDQNEDEETPG). Positions 280 to 290 (SIEKNTKNEKK) are enriched in basic and acidic residues. The segment covering 291–304 (EDEDEDQNEDEETP) has biased composition (acidic residues). Cysteine 478 contributes to the heme binding site.

It belongs to the cytochrome P450 family. Heme serves as cofactor.

The protein resides in the membrane. It participates in secondary metabolite biosynthesis; terpenoid biosynthesis. Its function is as follows. Cytochrome P450 monooxygenase; part of the cluster A that mediates the biosynthesis of chevalone E and its oxidized derivatives that possess a unique five-membered lactone ring and can synergistically enhance the cytotoxicity of doxorubicin (DOX) in breast cancer cells. Within the pathway, cle2 is involved in hydroxylation of the chavalone E scaffold at position C-20 and contributes with cle4 to the production of seven oxidation derivatives. The molecular scaffold is commonly biosynthesized by a series of enzymes including the non-reducing polyketide synthase (NR-PKS) cle1 that produces the alpha-pyrone triacetic acid lactone (TAL); The membrane-bound prenyltransferase cle5 that accepts TAL as its substrate to perform a C-3 geranylgeranylation reaction, in which the pathway-dedicated GGPS cle6 is required to provide GGPP, the other substrate of cle5; the FAD-dependent monooxygenase Cle3 that forms an (S)-epoxide ring at the terminal olefin of the geranylgeranyl group; and the terpene cyclase Cle7 that catalyzes the cyclization of the prenyl group that yields the pentacyclic pathway intermediate chevalone E. Chevalone E can derivatize into seven new oxidized analogs by the cytochrome P450 monooxygenases cle2 (acting at C-20) and cle4 (acting at C-11 and C-12). The chain is Cytochrome P450 monooxygenase cle2 from Aspergillus versicolor.